A 310-amino-acid polypeptide reads, in one-letter code: Elongation factor Ts (310 aa).

Residues 80-83 form an involved in Mg(2+) ion dislocation from EF-Tu region; sequence TDFV.

This sequence belongs to the EF-Ts family.

Its subcellular location is the cytoplasm. Functionally, associates with the EF-Tu.GDP complex and induces the exchange of GDP to GTP. It remains bound to the aminoacyl-tRNA.EF-Tu.GTP complex up to the GTP hydrolysis stage on the ribosome. This is Elongation factor Ts from Beijerinckia indica subsp. indica (strain ATCC 9039 / DSM 1715 / NCIMB 8712).